The primary structure comprises 192 residues: Thiamine transporter ThiT (192 aa).

Helical transmembrane passes span 10–30 (LIEI…SGMF), 31–51 (LSMP…LISF), 57–77 (AGLT…NLFA), 81–101 (VQLL…GCFA), 123–143 (AVFI…AVFF), and 164–184 (YMVP…MTAP).

It belongs to the vitamin uptake transporter (VUT/ECF) (TC 2.A.88) family. Thiamine transporter subfamily. As to quaternary structure, forms a stable energy-coupling factor (ECF) transporter complex composed of a membrane-embedded substrate-binding protein (S component), two ATP-binding proteins (A components) and a transmembrane protein (T component).

The protein resides in the cell membrane. Its function is as follows. Probably a thiamine-binding protein that interacts with the energy-coupling factor (ECF) ABC-transporter complex. Unlike classic ABC transporters this ECF transporter provides the energy necessary to transport a number of different substrates. The substrates themselves are bound by transmembrane, not extracytoplasmic soluble proteins. The polypeptide is Thiamine transporter ThiT (thiT) (Bacillus subtilis (strain 168)).